Consider the following 327-residue polypeptide: Glycerol-3-phosphate acyltransferase (327 aa).

The next 5 membrane-spanning stretches (helical) occupy residues 3-23, 52-72, 78-98, 112-132, and 152-172; these read SLLWLAVAYVMGSIPFGLLFA, VGVLTLVCDALKGAIPVAVAL, TVFHSLTALAALLGHLYSCFL, VFLPLAFWPLVLSGIACLAVI, and MLLLGGHWKLVPLALVVMVLV. 2 disordered regions span residues 184–212 and 233–327; these read SRGEEKPWQKKHHDAAQGTDAGAAPEAAA and PSTE…SSGQ. Over residues 199–212 the composition is skewed to low complexity; that stretch reads AQGTDAGAAPEAAA. Residues 237–246 are compositionally biased toward polar residues; that stretch reads AAPSQETSDA. Over residues 259–271 the composition is skewed to basic and acidic residues; sequence EGDKRENEEHDNA.

This sequence belongs to the PlsY family. In terms of assembly, probably interacts with PlsX.

It is found in the cell inner membrane. It catalyses the reaction an acyl phosphate + sn-glycerol 3-phosphate = a 1-acyl-sn-glycero-3-phosphate + phosphate. The protein operates within lipid metabolism; phospholipid metabolism. Functionally, catalyzes the transfer of an acyl group from acyl-phosphate (acyl-PO(4)) to glycerol-3-phosphate (G3P) to form lysophosphatidic acid (LPA). This enzyme utilizes acyl-phosphate as fatty acyl donor, but not acyl-CoA or acyl-ACP. This chain is Glycerol-3-phosphate acyltransferase, found in Nitratidesulfovibrio vulgaris (strain ATCC 29579 / DSM 644 / CCUG 34227 / NCIMB 8303 / VKM B-1760 / Hildenborough) (Desulfovibrio vulgaris).